The chain runs to 900 residues: Peroxisomal hydratase-dehydrogenase-epimerase (900 aa).

Short-chain dehydrogenase like regions lie at residues 6–230 (SFKD…THES) and 319–535 (SLCN…ASEE). NADP(+) contacts are provided by isoleucine 14, lysine 53, asparagine 100, arginine 133, tyrosine 165, and lysine 169. Residue tyrosine 165 is the Proton donor of the active site. Catalysis depends on lysine 169, which acts as the Lowers pKa of active site Tyr. Residues histidine 689, glycine 690, lysine 719, aspartate 803, asparagine 805, glycine 826, phenylalanine 851, and threonine 852 each coordinate (3R)-3-hydroxydecanoyl-CoA. The 113-residue stretch at 775 to 887 (EVPHGKVPDF…DTTRNVIVLD (113 aa)) folds into the MaoC-like domain. The short motif at 898-900 (SKL) is the Microbody targeting signal element.

It belongs to the short-chain dehydrogenases/reductases (SDR) family. As to quaternary structure, monomer.

It is found in the peroxisome. It carries out the reaction a (3R)-3-hydroxyacyl-CoA = a (2E)-enoyl-CoA + H2O. It catalyses the reaction a (3R)-3-hydroxyacyl-CoA + NAD(+) = a 3-oxoacyl-CoA + NADH + H(+). The protein operates within lipid metabolism; fatty acid beta-oxidation. Second trifunctional enzyme acting on the beta-oxidation pathway for fatty acids, possessing hydratase-dehydrogenase-epimerase activities. Converts trans-2-enoyl-CoA via D-3-hydroxyacyl-CoA to 3-ketoacyl-CoA. In Saccharomyces cerevisiae (strain ATCC 204508 / S288c) (Baker's yeast), this protein is Peroxisomal hydratase-dehydrogenase-epimerase (FOX2).